The primary structure comprises 328 residues: Malate dehydrogenase (328 aa).

Position 11–17 (11–17) interacts with NAD(+); it reads GAAGQIG. The substrate site is built by R94 and R100. Residues N107, Q114, and 131-133 each bind NAD(+); that span reads VGN. 2 residues coordinate substrate: N133 and R164. H189 functions as the Proton acceptor in the catalytic mechanism.

Belongs to the LDH/MDH superfamily. MDH type 2 family.

It carries out the reaction (S)-malate + NAD(+) = oxaloacetate + NADH + H(+). Catalyzes the reversible oxidation of malate to oxaloacetate. The polypeptide is Malate dehydrogenase (Acinetobacter baumannii (strain SDF)).